Reading from the N-terminus, the 656-residue chain is Bifunctional protein ThiO/ThiG (656 aa).

A thiO region spans residues 1 to 395 (MQTTSDVLII…HAAENSEGSK (395 aa)). Residues 7-21 (VLIIGGGIIGLAIAV) and 48-50 (AGM) each bind FAD. A glycine-binding site is contributed by Glu56. Val169 serves as a coordination point for FAD. Residues Arg298 and Arg324 each contribute to the glycine site. 322 to 328 (HYRNGIL) serves as a coordination point for FAD. A thiG region spans residues 396–656 (DLLEIAGRKF…ASSPLTGLVG (261 aa)). Lys498 acts as the Schiff-base intermediate with DXP in catalysis. 1-deoxy-D-xylulose 5-phosphate contacts are provided by residues Gly559, 585–586 (AG), and 607–608 (NS).

This sequence in the N-terminal section; belongs to the DAO family. ThiO subfamily. It in the C-terminal section; belongs to the ThiG family. As to quaternary structure, interacts with ThiH and ThiS. Requires FAD as cofactor.

It localises to the cytoplasm. It catalyses the reaction glycine + O2 + H2O = glyoxylate + H2O2 + NH4(+). The enzyme catalyses [ThiS sulfur-carrier protein]-C-terminal-Gly-aminoethanethioate + 2-iminoacetate + 1-deoxy-D-xylulose 5-phosphate = [ThiS sulfur-carrier protein]-C-terminal Gly-Gly + 2-[(2R,5Z)-2-carboxy-4-methylthiazol-5(2H)-ylidene]ethyl phosphate + 2 H2O + H(+). Its pathway is cofactor biosynthesis; thiamine diphosphate biosynthesis. In terms of biological role, catalyzes the FAD-dependent oxidative deamination of glycine. Is essential for thiamine biosynthesis since the oxidation of glycine catalyzed by ThiO generates the glycine imine intermediate (dehydroglycine) required for the biosynthesis of the thiazole ring of thiamine pyrophosphate. Functionally, catalyzes the rearrangement of 1-deoxy-D-xylulose 5-phosphate (DXP) to produce the thiazole phosphate moiety of thiamine. Sulfur is provided by the thiocarboxylate moiety of the carrier protein ThiS. In vitro, sulfur can be provided by H(2)S. The chain is Bifunctional protein ThiO/ThiG (thiO/thiG) from Synechocystis sp. (strain ATCC 27184 / PCC 6803 / Kazusa).